A 553-amino-acid polypeptide reads, in one-letter code: Protein TIC 55, chloroplastic (553 aa).

A chloroplast-targeting transit peptide spans 1-60; the sequence is MALALASANSFLLPTKTHFALHVSPPPSKKTLLCTNPSSNFSFNKALSSRRRKQAWCVAA. The Stromal portion of the chain corresponds to 61–492; sequence AADVKDATLL…GCSSAIKAFQ (432 aa). The Rieske domain maps to 103-208; that stretch reads WYPLYLTKNV…VRDSQGVLWV (106 aa). Residues cysteine 144, histidine 146, cysteine 163, and histidine 166 each contribute to the [2Fe-2S] cluster site. Fe cation is bound by residues histidine 257 and histidine 262. A helical transmembrane segment spans residues 493–513; that stretch reads IWKNVLSGVVVALAALAILVS. The Chloroplast intermembrane portion of the chain corresponds to 514–518; it reads GRQWK. Residues 519–539 form a helical membrane-spanning segment; it reads VLLLASASLCSVGVYACSTAI. At 540 to 553 the chain is on the stromal side; that stretch reads AMNTTNFIRVHRRL.

In terms of assembly, part of the Tic complex. Interacts with TIC62 and TIC110. The cofactor is [2Fe-2S] cluster.

It localises to the plastid. Its subcellular location is the chloroplast inner membrane. Involved in protein precursor import into chloroplasts. Part of the redox regulon consisting of TIC32, TIC 55 and TIC62. This chain is Protein TIC 55, chloroplastic (TIC55), found in Pisum sativum (Garden pea).